Reading from the N-terminus, the 207-residue chain is Large ribosomal subunit protein uL4 (207 aa).

The interval 54–76 (RSAVRGGGRKPWRQKGTGRARQG) is disordered. Over residues 60-71 (GGRKPWRQKGTG) the composition is skewed to basic residues.

This sequence belongs to the universal ribosomal protein uL4 family. As to quaternary structure, part of the 50S ribosomal subunit.

In terms of biological role, one of the primary rRNA binding proteins, this protein initially binds near the 5'-end of the 23S rRNA. It is important during the early stages of 50S assembly. It makes multiple contacts with different domains of the 23S rRNA in the assembled 50S subunit and ribosome. Functionally, forms part of the polypeptide exit tunnel. The sequence is that of Large ribosomal subunit protein uL4 from Staphylococcus haemolyticus (strain JCSC1435).